Here is a 529-residue protein sequence, read N- to C-terminus: GTPase Obg (529 aa).

An Obg domain is found at 2–159 (ASFVDRVVLH…SDIVLELKSI (158 aa)). The 184-residue stretch at 160 to 343 (ADIALVGFPS…LGFAMAEIVK (184 aa)) folds into the OBG-type G domain. Residues 166–173 (GFPSAGKS), 191–195 (FTTLI), 212–215 (DVPG), 295–298 (NKVD), and 324–326 (SAT) contribute to the GTP site. Residues S173 and T193 each coordinate Mg(2+). Positions 363-447 (PRAVNETGFR…DDGVVFDWEP (85 aa)) constitute an OCT domain. The disordered stretch occupies residues 461–529 (GTDIRFADTG…ESGLDSGDES (69 aa)). Over residues 462–502 (TDIRFADTGDRPTRSQKREEQQERRDAKAAARAELEAERKA) the composition is skewed to basic and acidic residues.

The protein belongs to the TRAFAC class OBG-HflX-like GTPase superfamily. OBG GTPase family. Monomer. Mg(2+) serves as cofactor.

Its subcellular location is the cytoplasm. In terms of biological role, an essential GTPase which binds GTP, GDP and possibly (p)ppGpp with moderate affinity, with high nucleotide exchange rates and a fairly low GTP hydrolysis rate. Plays a role in control of the cell cycle, stress response, ribosome biogenesis and in those bacteria that undergo differentiation, in morphogenesis control. The polypeptide is GTPase Obg (Pseudarthrobacter chlorophenolicus (strain ATCC 700700 / DSM 12829 / CIP 107037 / JCM 12360 / KCTC 9906 / NCIMB 13794 / A6) (Arthrobacter chlorophenolicus)).